Here is a 271-residue protein sequence, read N- to C-terminus: Delta(7)-sterol-C5(6)-desaturase (271 aa).

2 helical membrane-spanning segments follow: residues isoleucine 44–leucine 64 and valine 120–isoleucine 140. In terms of domain architecture, Fatty acid hydroxylase spans alanine 130–threonine 259. Residues histidine 144–histidine 148 carry the Histidine box-1 motif. The short motif at histidine 158–histidine 162 is the Histidine box-2 element. Residues histidine 190–leucine 210 form a helical membrane-spanning segment. Positions histidine 235–histidine 239 match the Histidine box-3 motif.

Belongs to the sterol desaturase family. Fe cation serves as cofactor.

It localises to the endoplasmic reticulum membrane. It carries out the reaction a Delta(7)-sterol + 2 Fe(II)-[cytochrome b5] + O2 + 2 H(+) = a Delta(5),Delta(7)-sterol + 2 Fe(III)-[cytochrome b5] + 2 H2O. Functionally, involved in the biosynthesis of sitosterol and campesterol. The chain is Delta(7)-sterol-C5(6)-desaturase from Nicotiana tabacum (Common tobacco).